A 288-amino-acid polypeptide reads, in one-letter code: 4-diphosphocytidyl-2-C-methyl-D-erythritol kinase (288 aa).

The active site involves K13. 96-106 (PMGGGIGGGSS) is a binding site for ATP. D138 is an active-site residue.

Belongs to the GHMP kinase family. IspE subfamily.

It carries out the reaction 4-CDP-2-C-methyl-D-erythritol + ATP = 4-CDP-2-C-methyl-D-erythritol 2-phosphate + ADP + H(+). Its pathway is isoprenoid biosynthesis; isopentenyl diphosphate biosynthesis via DXP pathway; isopentenyl diphosphate from 1-deoxy-D-xylulose 5-phosphate: step 3/6. Functionally, catalyzes the phosphorylation of the position 2 hydroxy group of 4-diphosphocytidyl-2C-methyl-D-erythritol. This chain is 4-diphosphocytidyl-2-C-methyl-D-erythritol kinase, found in Aliivibrio fischeri (strain ATCC 700601 / ES114) (Vibrio fischeri).